Here is an 88-residue protein sequence, read N- to C-terminus: Putative septation protein SpoVG (88 aa).

It belongs to the SpoVG family.

In terms of biological role, could be involved in septation. The sequence is that of Putative septation protein SpoVG from Caldicellulosiruptor bescii (strain ATCC BAA-1888 / DSM 6725 / KCTC 15123 / Z-1320) (Anaerocellum thermophilum).